The chain runs to 692 residues: Elongation factor G (692 aa).

One can recognise a tr-type G domain in the interval 9-284; sequence HMVRNIGIAA…AVVDYLPAPD (276 aa). GTP contacts are provided by residues 18–25, 82–86, and 136–139; these read AHIDAGKT, DTPGH, and NKMD.

It belongs to the TRAFAC class translation factor GTPase superfamily. Classic translation factor GTPase family. EF-G/EF-2 subfamily.

The protein resides in the cytoplasm. Functionally, catalyzes the GTP-dependent ribosomal translocation step during translation elongation. During this step, the ribosome changes from the pre-translocational (PRE) to the post-translocational (POST) state as the newly formed A-site-bound peptidyl-tRNA and P-site-bound deacylated tRNA move to the P and E sites, respectively. Catalyzes the coordinated movement of the two tRNA molecules, the mRNA and conformational changes in the ribosome. This is Elongation factor G from Campylobacter curvus (strain 525.92).